Consider the following 350-residue polypeptide: D-guloside 3-dehydrogenase (350 aa).

It belongs to the zinc-containing alcohol dehydrogenase family. Requires Zn(2+) as cofactor.

It carries out the reaction a D-guloside + NAD(+) = a 3-dehydro-D-guloside + NADH + H(+). Its function is as follows. Catalyzes the NAD(+)-dependent oxidation of the hydroxyl group at C3 of D-gulosides leading to 3-dehydro-D-gulosides. Probably functions in a metabolic pathway that transforms D-gulosides to D-glucosides. Is also able to catalyze the reverse reactions, i.e. the NADH-dependent reduction of the oxo group at C3 of 3-dehydro-D-gulosides leading to D-gulosides. In vitro, can oxidize D-gulose and methyl beta-D-guloside, and reduce methyl alpha-3-dehydro-D-guloside and methyl beta-3-dehydro-D-guloside. However, the actual specific physiological substrates for this metabolic pathway are unknown. This chain is D-guloside 3-dehydrogenase (ycjQ), found in Escherichia coli (strain K12).